We begin with the raw amino-acid sequence, 311 residues long: Ketoisovalerate oxidoreductase subunit VorB (311 aa).

In terms of assembly, heterotetramer of one alpha, one beta, one delta and one gamma chain.

The catalysed reaction is 3-methyl-2-oxobutanoate + 2 oxidized [2Fe-2S]-[ferredoxin] + CoA = 2-methylpropanoyl-CoA + 2 reduced [2Fe-2S]-[ferredoxin] + CO2 + H(+). This is Ketoisovalerate oxidoreductase subunit VorB (vorB) from Pyrococcus furiosus (strain ATCC 43587 / DSM 3638 / JCM 8422 / Vc1).